Reading from the N-terminus, the 333-residue chain is Chitinase-like protein 2 (333 aa).

An N-terminal signal peptide occupies residues 1–27 (MVSKPLFSLLLLTVALVVFQTGTLVNA). Cysteine 50 and cysteine 56 are joined by a disulfide. Residue asparagine 65 is glycosylated (N-linked (GlcNAc...) asparagine). Cysteine 165 and cysteine 175 form a disulfide bridge. N-linked (GlcNAc...) asparagine glycosylation is found at asparagine 216 and asparagine 252. Cysteine 275 and cysteine 313 are disulfide-bonded. The segment at 307–333 (PHEKLSCADQEPFSSSSSAPPSSGSSS) is disordered. Low complexity predominate over residues 320 to 333 (SSSSSAPPSSGSSS).

The protein belongs to the glycosyl hydrolase 19 family. As to expression, mostly expressed in stems, especially in xylem and interfascicular fibers.

The protein resides in the secreted. Functionally, no chitinase activity. Required for proper cell wall biosynthesis in etiolated seedlings. Prevents lignin accumulation in hypocotyls. The sequence is that of Chitinase-like protein 2 (CTL2) from Arabidopsis thaliana (Mouse-ear cress).